The chain runs to 759 residues: uncharacterized protein (759 aa).

This is an uncharacterized protein from Escherichia coli (strain K12).